Consider the following 3001-residue polypeptide: BEACH domain-containing protein C2 (3001 aa).

Disordered stretches follow at residues 43–80 (DFEQVSLGDQEKAANESQGDLQEPGSFSNSDHGRSSFG), 103–156 (DVQS…KATV), 1018–1076 (NVLA…NVGS), 1846–1868 (TFSSFQKPLEPPNNNAPPRPRDK), 2039–2071 (YSGTDHHGAAADYDDQTETKSDNGSKGSQSNPP), 2101–2132 (AEEHKRDEGRISGSHEHASRTSAGNSDPRTSN), and 2193–2212 (NLADHSDESQSGDQEKDRSW). The residue at position 48 (S48) is a Phosphoserine. Polar residues-rich tracts occupy residues 57–72 (NESQGDLQEPGSFSNS), 121–132 (SMQQSLSETSLD), and 1037–1050 (SPYNESGSVKQLDS). A compositionally biased stretch (pro residues) spans 1854–1863 (LEPPNNNAPP). Positions 2101–2119 (AEEHKRDEGRISGSHEHAS) are enriched in basic and acidic residues. Residues 2120 to 2129 (RTSAGNSDPR) are compositionally biased toward polar residues. Positions 2151-2260 (ELDERILLEL…GRRNAYRAIV (110 aa)) constitute a BEACH-type PH domain. A compositionally biased stretch (basic and acidic residues) spans 2196 to 2211 (DHSDESQSGDQEKDRS). In terms of domain architecture, BEACH spans 2275–2564 (QRPEQLLRRT…QLLTVPHMKR (290 aa)). WD repeat units lie at residues 2679-2718 (SGIRSSSVIAITSDGEIITGGHADNSIKLVSSDGAKTLET), 2721-2760 (GHCAPVTCLALSPDNNFLVTGSRDSTVLLWRIHKAFTSRT), 2802-2841 (GHRRELVCCCVSSDQGVVVSSSESSDVLLHSIRKGRLIRR), 2842-2881 (LVGVKADSLCISSDGVIMAWSSSEGSISVFTINGVLIAKA), and 2953-2992 (GQGQDITALALNVDNTNLLVSTEDKQLIIFTDPALSLKVV).

This Arabidopsis thaliana (Mouse-ear cress) protein is BEACH domain-containing protein C2.